A 384-amino-acid polypeptide reads, in one-letter code: N-acetylneuraminate epimerase (384 aa).

The N-terminal stretch at 1-29 (MGMQMKNFKKMMTLMALCLSVAITTSGYA) is a signal peptide. Kelch repeat units lie at residues 51–95 (VIYV…VFLN), 97–149 (KLYV…VKLN), 151–184 (TMVLITGGVNEHIFDKYFIDIAAADESEKNKVIY), 185–230 (NYFN…VMEN), 233–282 (LMLI…LAGA), 304–353 (QNYT…SYGD), and 355–384 (VFLIGGENAKGKPVSSVTSFTMRDGNLLIK). Glutamate 239 functions as the Proton acceptor in the catalytic mechanism.

The protein belongs to the NanM family. In terms of assembly, homodimer.

The protein localises to the periplasm. The catalysed reaction is N-acetyl-alpha-neuraminate = N-acetyl-beta-neuraminate. Functionally, converts alpha-N-acetylneuranimic acid (Neu5Ac) to the beta-anomer, accelerating the equilibrium between the alpha- and beta-anomers. Probably facilitates sialidase-negative bacteria to compete successfully for limited amounts of extracellular Neu5Ac, which is likely taken up in the beta-anomer. In addition, the rapid removal of sialic acid from solution might be advantageous to the bacterium to damp down host responses. The sequence is that of N-acetylneuraminate epimerase from Salmonella typhi.